Reading from the N-terminus, the 561-residue chain is Small ribosomal subunit protein bS1 (561 aa).

6 S1 motif domains span residues G22–E88, G106–R172, G193–K261, G278–K348, G365–K435, and G452–K521.

This sequence belongs to the bacterial ribosomal protein bS1 family.

Functionally, binds mRNA; thus facilitating recognition of the initiation point. It is needed to translate mRNA with a short Shine-Dalgarno (SD) purine-rich sequence. This is Small ribosomal subunit protein bS1 (rpsA) from Neisseria meningitidis serogroup B (strain ATCC BAA-335 / MC58).